A 603-amino-acid chain; its full sequence is uncharacterized protein (603 aa).

A PE domain is found at 1–93; sequence MSFVIAAPET…AGAYASAEAA (93 aa). Positions 309-333 are disordered; the sequence is GIFTGNGGTGGTGGTGTGNQLVGGE.

The protein belongs to the mycobacterial PE family. PGRS subfamily.

This is an uncharacterized protein from Mycobacterium tuberculosis (strain CDC 1551 / Oshkosh).